Here is a 295-residue protein sequence, read N- to C-terminus: Apolipoprotein E (295 aa).

An N-terminal signal peptide occupies residues 1 to 18 (MKVLWAALLVTFLAGCQA). 6 tandem repeats follow at residues 80–101 (TLMDETMKELKAYKSELEEQLS), 102–123 (PVAEETRARLSKELQAAQARLG), 124–145 (ADMEDVRSRLVQYRSEVQAMLG), 146–167 (QSTEELRARLASHLRKLRKRLL), 193–211 (TVGSLASQPLQERAQAKLR), and 212–233 (ARMEEMGSRTRDRLDEVKEQVA). Residues 80-233 (TLMDETMKEL…RLDEVKEQVA (154 aa)) are 6 X 22 AA approximate tandem repeats. The residue at position 143 (M143) is a Methionine sulfoxide. The residue at position 147 (S147) is a Phosphoserine. The LDL and other lipoprotein receptors binding stretch occupies residues 158–168 (HLRKLRKRLLR). A heparin-binding site is contributed by 162-165 (LRKR). The interval 191-268 (AATVGSLASQ…SWFEPLVEDM (78 aa)) is lipid-binding and lipoprotein association. Residues 244 to 295 (QQISLQAEAFQARLKSWFEPLVEDMQRQWAGLVEKVQAAVGASTAPVPSDNH) form a homooligomerization region. The interval 256–268 (RLKSWFEPLVEDM) is specificity for association with VLDL.

The protein belongs to the apolipoprotein A1/A4/E family. In terms of assembly, homotetramer. May interact with ABCA1; functionally associated with ABCA1 in the biogenesis of HDLs. May interact with APP/A4 amyloid-beta peptide; the interaction is extremely stable in vitro but its physiological significance is unclear. May interact with MAPT. May interact with MAP2. In the cerebrospinal fluid, interacts with secreted SORL1. Interacts with PMEL; this allows the loading of PMEL luminal fragment on ILVs to induce fibril nucleation. APOE exists as multiple glycosylated and sialylated glycoforms within cells and in plasma. The extent of glycosylation and sialylation are tissue and context specific. In terms of processing, glycated in plasma VLDL. Post-translationally, phosphorylated by FAM20C in the extracellular medium.

Its subcellular location is the secreted. It is found in the extracellular space. The protein localises to the extracellular matrix. The protein resides in the extracellular vesicle. It localises to the endosome. Its subcellular location is the multivesicular body. In terms of biological role, APOE is an apolipoprotein, a protein associating with lipid particles, that mainly functions in lipoprotein-mediated lipid transport between organs via the plasma and interstitial fluids. APOE is a core component of plasma lipoproteins and is involved in their production, conversion and clearance. Apolipoproteins are amphipathic molecules that interact both with lipids of the lipoprotein particle core and the aqueous environment of the plasma. As such, APOE associates with chylomicrons, chylomicron remnants, very low density lipoproteins (VLDL) and intermediate density lipoproteins (IDL) but shows a preferential binding to high-density lipoproteins (HDL). It also binds a wide range of cellular receptors including the LDL receptor/LDLR, the LDL receptor-related proteins LRP1, LRP2 and LRP8 and the very low-density lipoprotein receptor/VLDLR that mediate the cellular uptake of the APOE-containing lipoprotein particles. Finally, APOE also has a heparin-binding activity and binds heparan-sulfate proteoglycans on the surface of cells, a property that supports the capture and the receptor-mediated uptake of APOE-containing lipoproteins by cells. A main function of APOE is to mediate lipoprotein clearance through the uptake of chylomicrons, VLDLs, and HDLs by hepatocytes. APOE is also involved in the biosynthesis by the liver of VLDLs as well as their uptake by peripheral tissues ensuring the delivery of triglycerides and energy storage in muscle, heart and adipose tissues. By participating in the lipoprotein-mediated distribution of lipids among tissues, APOE plays a critical role in plasma and tissues lipid homeostasis. APOE is also involved in two steps of reverse cholesterol transport, the HDLs-mediated transport of cholesterol from peripheral tissues to the liver, and thereby plays an important role in cholesterol homeostasis. First, it is functionally associated with ABCA1 in the biogenesis of HDLs in tissues. Second, it is enriched in circulating HDLs and mediates their uptake by hepatocytes. APOE also plays an important role in lipid transport in the central nervous system, regulating neuron survival and sprouting. In Macaca mulatta (Rhesus macaque), this protein is Apolipoprotein E (APOE).